Here is a 1469-residue protein sequence, read N- to C-terminus: MQPFKRRALTSDDDRPYADTDSMPEVDLDVDRRRQYMEQLNIFDDVSSGAYMLELEAAENGVKYDEKEDLLNVQIPPKYEDQISDPDGNRMIILNIYVENFKSYAGKHILGPFHKNLTMILGPNGSGKSNVIDALLFVFGFKAGKIRTKKLSALINSGGNYESCSVTIMFQMVKDMPVENYDKYEVLTDNCVCITRTINRENNSKYRIDDKDASQKDVQELLLRAGIDMTHNRFLILQGEVEAIALMKPTSKNPNEEGMLEYIEDIVGTNRFVAPISKLMHRVSLLEHKSSQYGASVRRHEGHLKVFEKAMVIGMAYLNTFNNLNYLRGIRVKHNLCRYAETMRDAKMSLVTRTGELEENKDIMLEAKDEVRKKETHERSLNSIVTELENKRIDWQSKKNDWHARDAKRKQGLKSCTQDLGKLMKERDEARREKFEIETAPENARISKQNMQLEWDQLKEQENVCQRTATENLIKYDQKSSADRAKHDDLEKKLSDELLQSMRAKAELDVSESELKDMTIMMEQGQKRVDELKGTLQTMMAENIRDNTELNAVTTELQDRKLKFDKAVEKLPHLKSTEQLLRSKKYELDQEVIEASNTQEVTYRHQATAKLHELKEAGLFPGFKGRLGDLASIPIKFDTAISTVFFAQLDYHVVQTSDECRIGIGFCHEYKLPRTTFVFLDHLKDTDTSGMDSTMKFPAERLFDKIHCVNPEIRREFYFLIHDILVVDSLEEATRIDKKYPGRHRYCTLNGSILNRSGALTGGGKPTTGRIRNDNNPNMSGVKKVDLSKLRAAQEKHNHALEAHLKLQLKQEEIRADNGPIIKQLEIRKRELIMSTKEQKTRIAELKSSIAAHERRMVNYREVTVEDLDEKRAQIADLKRQVEESQKSSAKIKQQIEQYKRKMDRMFMELVQKNKDSIEQAKDRMGQLEQDIARQTAIIENNPSHLEQAEKKLSELEHMCLEKRSEADALAQLEVGEDVKGIDIINAQLQTSTASIDAQRARYTEAVAARREADAAYQTTVDNYNMVKQTYDELMRIIDDLENKTMADNAELDIIESAWMQPEKLYPPGKFVRYNDPDIAAKMTDGHVVLPYECISMIEPHREAYEEHEARMLEDDVFEDTANKICKLEKDVDKFRREFDNKGVRDYAMIVSLLMNEVTSAKKFSDKLKAHREKLNELRMARFNEFSEALAFLGTTTQMLYQLITNGGDASLKFVEEGKSTDPFDGGIKFSVRPAKKSWKLIENLSGGEKTLASLCFVFAMHHYRPTPLYVMDEIDAALDLNNVSLIANYIKHSERTRNAQFIIISLRNQMFEVGNRLLGIYKIDGKTYNIMVDPIAVEIKNRPILKIFEEEIKRREKLRRAEIEPEIDLSNGLSNVVIAPKRKQRRLEMLKLSDFGLDDDSDLPEFNRFPPATRRELSVEDSDEDDEPVRRRPRRQVEEEDEEDELIEEATPSPPPIVVQRRVRRSRH.

The interval 1–25 (MQPFKRRALTSDDDRPYADTDSMPE) is disordered. Basic and acidic residues predominate over residues 9–18 (LTSDDDRPYA). Position 122-129 (122-129 (GPNGSGKS)) interacts with ATP. Positions 356-542 (ELEENKDIML…KGTLQTMMAE (187 aa)) form a coiled coil. The 116-residue stretch at 621–736 (PGFKGRLGDL…VDSLEEATRI (116 aa)) folds into the SMC hinge domain. The tract at residues 758–781 (GALTGGGKPTTGRIRNDNNPNMSG) is disordered. 3 coiled-coil regions span residues 805–974 (LKLQ…AQLE), 1016–1056 (AYQT…DIIE), and 1159–1182 (TSAKKFSDKLKAHREKLNELRMAR). The segment at 1404–1469 (LPEFNRFPPA…VQRRVRRSRH (66 aa)) is disordered. Positions 1439–1449 (EEEDEEDELIE) are enriched in acidic residues.

It belongs to the SMC family. SMC4 subfamily. As to quaternary structure, component of the dosage compensation complex, which contains the mix-1/SMC2 and dpy-27/SMC4 heterodimer, and three non SMC subunits that probably regulate the complex: dpy-26, capg-1 and dpy-28. Within the complex, interacts with dpy-28, mix-1, dpy-26 and capg-1. Interacts with dpy-21. Interacts with dpy-28; the interaction is required for dpy-28 protein stability and dpy-28 association with the X chromosome. Interacts with smcl-1.

The protein localises to the nucleus. It is found in the chromosome. Its function is as follows. Central component of the condensin I-like dosage compensation complex that associates specifically with hermaphrodite X chromosomes to reduce their gene transcription throughout development. Its strong similarity with the condensin subunit smc4 suggests that it may reduce the X-chromosome transcript level by condensing the chromatin structure during interphase. Involved in the recruitment of the dosage compensation proteins mix-1 and dpy-21 to the X chromosome. Might be involved in the reduction of histone H4 lysine 16 acetylation (H4K16ac) on dosage compensated X chromosomes. As a member of the dosage compensation complex, also binds to regulatory regions of the autosomal her-1 gene, required for male development, possibly contributing to its repression in hermaphrodites. Also plays a role in the regulation of growth and body fat metabolism downstream of the TOR complex 2 pathway. The chain is Chromosome condensation protein dpy-27 (dpy-27) from Caenorhabditis elegans.